The chain runs to 400 residues: MRTIDDLQVAGHRVLVRSDLNVPLDRSGDTPRITDDGRVRASVPTISALLDRGARVVVSSHLGRPKGEPDPKYSLEPVAGRLAELLGRPVAFAGDGSGDIAGAHAREVVAGLGDGEVALLENLRFAAGETSKDAAIRAAFADELSALAEFYVGDAFGAVHRAHASVADVPKRLPHAAGRLVLTELEVLRRLSSDPARPYSVVLGGSKVSDKLGVIRALLPKVDALLVGGGMCFTFLAALGHGVGGSLLETEMIETCKELLAEGGERIVLPTDVVVADRFAADADTAVVAADAIPAGWLGLDIGPASTELFAARLAGAATVFWNGPMGVFELAPFAAGTRGVAEAVAAGKGFSVVGGGDSAAAVRTLGIPEDAFSHISTGGGASLEYLEGKTLPGLAALDV.

Substrate contacts are provided by residues 19 to 21, Arg-38, 61 to 64, Arg-124, and Arg-161; these read DLN and HLGR. ATP contacts are provided by residues Lys-211, Gly-299, Glu-330, and 356-359; that span reads GGDS.

Belongs to the phosphoglycerate kinase family. As to quaternary structure, monomer.

Its subcellular location is the cytoplasm. The enzyme catalyses (2R)-3-phosphoglycerate + ATP = (2R)-3-phospho-glyceroyl phosphate + ADP. It functions in the pathway carbohydrate degradation; glycolysis; pyruvate from D-glyceraldehyde 3-phosphate: step 2/5. The sequence is that of Phosphoglycerate kinase from Frankia casuarinae (strain DSM 45818 / CECT 9043 / HFP020203 / CcI3).